Reading from the N-terminus, the 336-residue chain is Mitochondrial import receptor subunit TOM40 homolog (336 aa).

The tract at residues 1-58 is disordered; it reads MGNVLAASSPAPPPAGSPPVPGLVSVPPGFTMPPVAGLTPTPDKKEPQEERLPNPGTF. Residues 10-21 are compositionally biased toward pro residues; that stretch reads PAPPPAGSPPVP. Over residues 42–52 the composition is skewed to basic and acidic residues; sequence PDKKEPQEERL.

It belongs to the Tom40 family. As to quaternary structure, forms part of the preprotein translocase complex of the outer mitochondrial membrane (TOM complex). Interacts with mitochondrial targeting sequences.

Its subcellular location is the mitochondrion outer membrane. Channel-forming protein essential for import of protein precursors into mitochondria. This chain is Mitochondrial import receptor subunit TOM40 homolog (tomm40), found in Xenopus laevis (African clawed frog).